Reading from the N-terminus, the 250-residue chain is Small ribosomal subunit protein uS3 (250 aa).

A KH type-2 domain is found at 39-107; the sequence is VREFLTKKLK…PAQVSINEID (69 aa). Residues 215-250 are disordered; sequence MNPAPAEERPAKRGRGRGEGQERRGRRGDRAADKGE. Residues 220–250 are compositionally biased toward basic and acidic residues; that stretch reads AEERPAKRGRGRGEGQERRGRRGDRAADKGE.

This sequence belongs to the universal ribosomal protein uS3 family. Part of the 30S ribosomal subunit. Forms a tight complex with proteins S10 and S14.

In terms of biological role, binds the lower part of the 30S subunit head. Binds mRNA in the 70S ribosome, positioning it for translation. This Acinetobacter baumannii (strain AB307-0294) protein is Small ribosomal subunit protein uS3.